The following is a 291-amino-acid chain: Putative GATA transcription factor 13 (291 aa).

The segment at Lys-187–Pro-241 adopts a GATA-type zinc-finger fold. The interval Thr-271–Gln-291 is disordered.

The protein belongs to the type IV zinc-finger family. Class A subfamily.

Its subcellular location is the nucleus. Transcriptional activator that specifically binds 5'-GATA-3' or 5'-GAT-3' motifs within gene promoters. May be involved in the regulation of some light-responsive genes. The protein is Putative GATA transcription factor 13 (GATA13) of Arabidopsis thaliana (Mouse-ear cress).